Reading from the N-terminus, the 199-residue chain is Oleosin 21.2 kDa (199 aa).

Positions 1-14 (MADTHRVDRTDRHF) are enriched in basic and acidic residues. Positions 1–31 (MADTHRVDRTDRHFQFQSPYEGGRGQGQYEG) are disordered. Ala2 is modified (N-acetylalanine). Positions 2–56 (ADTHRVDRTDRHFQFQSPYEGGRGQGQYEGDRGYGGGGYKSMMPESGPSSTQVLS) are polar. Residues 22 to 31 (GGRGQGQYEG) are compositionally biased toward gly residues. 3 consecutive transmembrane segments (helical) span residues 51-71 (STQV…LALA), 72-92 (GLLL…FLLF), and 96-116 (IVPA…SGMF). Residues 57–128 (LLIGVPVVGS…TGLSSISWVM (72 aa)) form a hydrophobic region. The segment at 159–199 (KGKEMGQHVQNKAQDVKQYDISKPHDTTTKGHETQGRTTAA) is disordered. A compositionally biased stretch (basic and acidic residues) spans 172–193 (QDVKQYDISKPHDTTTKGHETQ).

It belongs to the oleosin family.

It localises to the lipid droplet. The protein resides in the membrane. May have a structural role to stabilize the lipid body during desiccation of the seed by preventing coalescence of the oil. Probably interacts with both lipid and phospholipid moieties of lipid bodies. May also provide recognition signals for specific lipase anchorage in lipolysis during seedling growth. This is Oleosin 21.2 kDa from Arabidopsis thaliana (Mouse-ear cress).